Here is a 120-residue protein sequence, read N- to C-terminus: Putative iron-sulfur cluster insertion protein ErpA (120 aa).

Cys49, Cys113, and Cys115 together coordinate iron-sulfur cluster.

The protein belongs to the HesB/IscA family. Homodimer. Iron-sulfur cluster is required as a cofactor.

In terms of biological role, required for insertion of 4Fe-4S clusters. This is Putative iron-sulfur cluster insertion protein ErpA from Albidiferax ferrireducens (strain ATCC BAA-621 / DSM 15236 / T118) (Rhodoferax ferrireducens).